Reading from the N-terminus, the 115-residue chain is MGTRLLCWAALCLLGAELTEAGVAQSPRYKIIEKRQSVAFWCNPISGHATLYWYQQILGQGPKLLIQFQNNGVVDDSQLPKDRFSAERLKGVDSTLKIQPAKLEDSAVYLCASSL.

Positions 1–21 are cleaved as a signal peptide; it reads MGTRLLCWAALCLLGAELTEA. In terms of domain architecture, Ig-like spans 22–115; it reads GVAQSPRYKI…SAVYLCASSL (94 aa). A disulfide bond links cysteine 42 and cysteine 111.

Alpha-beta TR is a heterodimer composed of an alpha and beta chain; disulfide-linked. The alpha-beta TR is associated with the transmembrane signaling CD3 coreceptor proteins to form the TR-CD3 (TcR or TCR). The assembly of alpha-beta TR heterodimers with CD3 occurs in the endoplasmic reticulum where a single alpha-beta TR heterodimer associates with one CD3D-CD3E heterodimer, one CD3G-CD3E heterodimer and one CD247 homodimer forming a stable octameric structure. CD3D-CD3E and CD3G-CD3E heterodimers preferentially associate with TR alpha and TR beta chains, respectively. The association of the CD247 homodimer is the last step of TcR assembly in the endoplasmic reticulum and is required for transport to the cell surface.

It localises to the cell membrane. V region of the variable domain of T cell receptor (TR) beta chain that participates in the antigen recognition. Alpha-beta T cell receptors are antigen specific receptors which are essential to the immune response and are present on the cell surface of T lymphocytes. Recognize peptide-major histocompatibility (MH) (pMH) complexes that are displayed by antigen presenting cells (APC), a prerequisite for efficient T cell adaptive immunity against pathogens. Binding of alpha-beta TR to pMH complex initiates TR-CD3 clustering on the cell surface and intracellular activation of LCK that phosphorylates the ITAM motifs of CD3G, CD3D, CD3E and CD247 enabling the recruitment of ZAP70. In turn ZAP70 phosphorylates LAT, which recruits numerous signaling molecules to form the LAT signalosome. The LAT signalosome propagates signal branching to three major signaling pathways, the calcium, the mitogen-activated protein kinase (MAPK) kinase and the nuclear factor NF-kappa-B (NF-kB) pathways, leading to the mobilization of transcription factors that are critical for gene expression and essential for T cell growth and differentiation. The T cell repertoire is generated in the thymus, by V-(D)-J rearrangement. This repertoire is then shaped by intrathymic selection events to generate a peripheral T cell pool of self-MH restricted, non-autoaggressive T cells. Post-thymic interaction of alpha-beta TR with the pMH complexes shapes TR structural and functional avidity. This chain is T cell receptor beta variable 11-2, found in Homo sapiens (Human).